The sequence spans 86 residues: CLAVATA3/ESR (CLE)-related protein 7 (86 aa).

The N-terminal stretch at 1–22 (MASKALLLFVMLTFLLVIEMEG) is a signal peptide. Asn-46 is a glycosylation site (N-linked (GlcNAc...) asparagine). Residues 63–86 (VDRFSPGGPDPQHHSYPLSSKPRI) form a disordered region. 2 positions are modified to hydroxyproline: Pro-68 and Pro-71. O-linked (Ara...) hydroxyproline glycosylation occurs at Pro-71.

The protein belongs to the CLV3/ESR signal peptide family. In terms of processing, the O-glycosylation (arabinosylation) of the hydroxyproline Pro-71 enhances binding affinity of the CLE7p peptide for its receptor. As to expression, expressed in roots and seedlings.

It localises to the secreted. It is found in the extracellular space. Functionally, extracellular signal peptide that regulates cell fate. The polypeptide is CLAVATA3/ESR (CLE)-related protein 7 (Arabidopsis thaliana (Mouse-ear cress)).